Here is a 179-residue protein sequence, read N- to C-terminus: Large ribosomal subunit protein uL6 (179 aa).

Belongs to the universal ribosomal protein uL6 family. Part of the 50S ribosomal subunit.

In terms of biological role, this protein binds to the 23S rRNA, and is important in its secondary structure. It is located near the subunit interface in the base of the L7/L12 stalk, and near the tRNA binding site of the peptidyltransferase center. This chain is Large ribosomal subunit protein uL6, found in Chlorobium phaeobacteroides (strain BS1).